The primary structure comprises 132 residues: ATP synthase epsilon chain (132 aa).

This sequence belongs to the ATPase epsilon chain family. As to quaternary structure, F-type ATPases have 2 components, CF(1) - the catalytic core - and CF(0) - the membrane proton channel. CF(1) has five subunits: alpha(3), beta(3), gamma(1), delta(1), epsilon(1). CF(0) has three main subunits: a, b and c.

The protein resides in the cell membrane. In terms of biological role, produces ATP from ADP in the presence of a proton gradient across the membrane. This is ATP synthase epsilon chain from Desulfitobacterium hafniense (strain DSM 10664 / DCB-2).